A 450-amino-acid chain; its full sequence is Exodeoxyribonuclease 7 large subunit (450 aa).

This sequence belongs to the XseA family. As to quaternary structure, heterooligomer composed of large and small subunits.

It is found in the cytoplasm. It catalyses the reaction Exonucleolytic cleavage in either 5'- to 3'- or 3'- to 5'-direction to yield nucleoside 5'-phosphates.. In terms of biological role, bidirectionally degrades single-stranded DNA into large acid-insoluble oligonucleotides, which are then degraded further into small acid-soluble oligonucleotides. The protein is Exodeoxyribonuclease 7 large subunit of Shewanella frigidimarina (strain NCIMB 400).